The sequence spans 87 residues: U14-lycotoxin-Ls1a (87 aa).

The first 20 residues, 1-20 (MNSKVFAVLLLLALSTCVLS), serve as a signal peptide directing secretion. Residues 21–66 (EKYCPTPRNTSCKKMNIRNNCCRDSDCTSNAFCCAEPCGNFCHKAS) form the WAP domain. Intrachain disulfides connect cysteine 24–cysteine 54, cysteine 32–cysteine 58, cysteine 41–cysteine 53, cysteine 42–cysteine 80, and cysteine 47–cysteine 62.

It belongs to the venom protein 11 family. 01 (wap-1) subfamily. Contains 5 disulfide bonds. As to expression, expressed by the venom gland.

Its subcellular location is the secreted. Functionally, has antibacterial activity. This chain is U14-lycotoxin-Ls1a, found in Lycosa singoriensis (Wolf spider).